Here is a 178-residue protein sequence, read N- to C-terminus: Translation initiation factor IF-3 (178 aa).

It belongs to the IF-3 family. As to quaternary structure, monomer.

The protein resides in the cytoplasm. Functionally, IF-3 binds to the 30S ribosomal subunit and shifts the equilibrium between 70S ribosomes and their 50S and 30S subunits in favor of the free subunits, thus enhancing the availability of 30S subunits on which protein synthesis initiation begins. In Picosynechococcus sp. (strain ATCC 27264 / PCC 7002 / PR-6) (Agmenellum quadruplicatum), this protein is Translation initiation factor IF-3.